Reading from the N-terminus, the 271-residue chain is Inactive phospholipid phosphatase 7 (271 aa).

The disordered stretch occupies residues 1–69 (MPVSQSRARA…RQSQQLPEED (69 aa)). Residues 1–112 (MPVSQSRARA…AASWASARSM (112 aa)) lie on the Cytoplasmic side of the membrane. The span at 24–36 (SLNQPPKGTQEPR) shows a compositional bias: polar residues. A phosphoserine mark is found at Ser-43 and Ser-62. An interaction with MTOR region spans residues 70-91 (CMQLNPSFKGIAFNSLLAIDIC). A helical transmembrane segment spans residues 113–133 (VKLIGITSHGIPWIGGTILCL). Topologically, residues 134–141 (VRSSTLAG) are extracellular. The chain crosses the membrane as a helical span at residues 142–162 (QEVLMNLLLALLLDIMTVAGV). Residues 163–202 (QKLIKRRGPYETSPGLLDYLTMDIYAFPAGHASRAAMVSK) lie on the Cytoplasmic side of the membrane. A helical membrane pass occupies residues 203 to 223 (FFLSHLVLAVPLRVLLVLWAF). Over 224 to 239 (CVGLSRVMIGRHHITD) the chain is Extracellular. The helical transmembrane segment at 240–260 (VISGFIIGYFQFRLVELVWMS) threads the bilayer. Residues 261–271 (SNTCQMLISAW) are Cytoplasmic-facing.

It belongs to the PA-phosphatase related phosphoesterase family. As to quaternary structure, homo- and heterooligomer. Interacts with MTOR; controls MTOR-dependent IGF2 expression during myoblast differentiation.

The protein resides in the nucleus envelope. Its subcellular location is the endoplasmic reticulum membrane. It localises to the membrane. Functionally, plays a role as negative regulator of myoblast differentiation, in part through effects on MTOR signaling. Has no detectable enzymatic activity. In Rattus norvegicus (Rat), this protein is Inactive phospholipid phosphatase 7.